The following is a 311-amino-acid chain: Methionyl-tRNA formyltransferase (311 aa).

112 to 115 contributes to the (6S)-5,6,7,8-tetrahydrofolate binding site; that stretch reads SLLP.

This sequence belongs to the Fmt family.

The catalysed reaction is L-methionyl-tRNA(fMet) + (6R)-10-formyltetrahydrofolate = N-formyl-L-methionyl-tRNA(fMet) + (6S)-5,6,7,8-tetrahydrofolate + H(+). Functionally, attaches a formyl group to the free amino group of methionyl-tRNA(fMet). The formyl group appears to play a dual role in the initiator identity of N-formylmethionyl-tRNA by promoting its recognition by IF2 and preventing the misappropriation of this tRNA by the elongation apparatus. The protein is Methionyl-tRNA formyltransferase of Rhizobium etli (strain ATCC 51251 / DSM 11541 / JCM 21823 / NBRC 15573 / CFN 42).